A 573-amino-acid polypeptide reads, in one-letter code: Septation ring formation regulator EzrA (573 aa).

Residues 1-2 (MQ) lie on the Extracellular side of the membrane. Residues 3–21 (VAIGIVVVAIVIYAAVKGF) traverse the membrane as a helical segment. The Cytoplasmic segment spans residues 22–573 (QFYIDKQVRQ…KQADKMNDEA (552 aa)). Coiled-coil stretches lie at residues 100 to 188 (DAQQ…LAKA), 317 to 364 (LTHA…VYQA), and 416 to 488 (ETLQ…TLKE).

This sequence belongs to the EzrA family.

The protein localises to the cell membrane. Functionally, negative regulator of FtsZ ring formation; modulates the frequency and position of FtsZ ring formation. Inhibits FtsZ ring formation at polar sites. Interacts either with FtsZ or with one of its binding partners to promote depolymerization. The chain is Septation ring formation regulator EzrA from Lactiplantibacillus plantarum (strain ATCC BAA-793 / NCIMB 8826 / WCFS1) (Lactobacillus plantarum).